Reading from the N-terminus, the 207-residue chain is Large ribosomal subunit protein uL4 (207 aa).

Residues 44–81 form a disordered region; the sequence is KRQGTQSAKTRSEVRGGGRKPWRQKGTGRARQGSIRSP. A compositionally biased stretch (basic residues) spans 60-71; sequence GGRKPWRQKGTG.

It belongs to the universal ribosomal protein uL4 family. As to quaternary structure, part of the 50S ribosomal subunit.

One of the primary rRNA binding proteins, this protein initially binds near the 5'-end of the 23S rRNA. It is important during the early stages of 50S assembly. It makes multiple contacts with different domains of the 23S rRNA in the assembled 50S subunit and ribosome. In terms of biological role, forms part of the polypeptide exit tunnel. The polypeptide is Large ribosomal subunit protein uL4 (Finegoldia magna (strain ATCC 29328 / DSM 20472 / WAL 2508) (Peptostreptococcus magnus)).